A 673-amino-acid polypeptide reads, in one-letter code: MSAETATSPAPAAETPVAPAPATQTTPAEGAPTPAAAAPGGNTVSASLYVGELDPSVTEAMLFEIFNMIGPVASIRVCRDAVTRRSLGYAYVNYLNAADGERALEHLNYSLIKGQSCRIMWSQRDPALRKTGQGNIFIKNLDQSIDNKALHDTFAAFGDILSCKVGTDENGKSRGFAFVHYSTGEAADAAIKAVNGMLLNDKKVYVGHHVGKKERLSKVEELRAQFTNVYIKNVDLEVTDAEFEDLVKPFGPTISVALSRDEKGVSKGFGFVNYENHESARKAVDELNEKEVNGKKLYAGRAQTKSEREAELKKSHEEKRLENEAKSAGVNLYVKNLDDEWDDDRLRAEFEAFGTITSSKVMRDDSGVSRGFGFVCYSSPDEATKAVSEMNGKMIGTKPLYVALAQRKDVRRQALESQIAQRAQQRMQYGAGFPGMQGYMGQPMYGYPPMPGYGQPMPGMPPVRGPMMGYPGAPQNMMQSRPRFNPNGQPLPGGVPAYGMPPQVPYPGAPGYPVRPGGARIPAAPNANGPRNGGPSPVGAPQGLPAGSIPRGGQMPARPHEQAAPAPQAGRLDAQSLARAAPAEQKQMLGEALYPLIHETQPELAGKITGMLLEMDNAELLHLVESQPALQEKVDEALRVLAEWGKDEKPAADEGAEEPKKEEEETKEEEKKE.

The segment at Met1 to Pro39 is disordered. 4 consecutive RRM domains span residues Ala46–Arg124, Gly134–Gly211, Thr227–Thr304, and Val330–Arg407. The disordered stretch occupies residues Gly300–Glu322. Residues Thr304 to Glu322 are compositionally biased toward basic and acidic residues. Disordered stretches follow at residues Ala509–Leu572 and Trp644–Glu673. The PABC domain maps to Ala569 to Lys646.

The protein belongs to the polyadenylate-binding protein type-1 family.

It localises to the cytoplasm. Its subcellular location is the nucleus. In terms of biological role, binds the poly(A) tail of mRNA. Appears to be an important mediator of the multiple roles of the poly(A) tail in mRNA biogenesis, stability and translation. In the nucleus, involved in both mRNA cleavage and polyadenylation. Is also required for efficient mRNA export to the cytoplasm. Acts in concert with a poly(A)-specific nuclease (PAN) to affect poly(A) tail shortening, which may occur concomitantly with either nucleocytoplasmic mRNA transport or translational initiation. In the cytoplasm, stimulates translation initiation and regulates mRNA decay through translation termination-coupled poly(A) shortening, probably mediated by PAN. This Cryptococcus neoformans var. neoformans serotype D (strain B-3501A) (Filobasidiella neoformans) protein is Polyadenylate-binding protein, cytoplasmic and nuclear (PAB1).